A 1997-amino-acid chain; its full sequence is Autophagy-related protein 2 homolog A (1997 aa).

Residues 17–119 (CRYLLQHYLG…RGAAQGTESQ (103 aa)) enclose the Chorein N-terminal domain. 5 disordered regions span residues 241–281 (TSVQ…IQQI), 1292–1323 (HCPP…CLPA), 1371–1414 (EEIK…TDTD), 1492–1534 (SSRP…TQGG), and 1684–1718 (RLDG…SSTD). Residues 1311–1321 (PEGPSSLPPCL) are compositionally biased toward pro residues. 3 stretches are compositionally biased toward polar residues: residues 1393–1408 (RVSQ…SGDS), 1493–1532 (SRPN…WRTQ), and 1690–1718 (KSSS…SSTD).

It belongs to the ATG2 family.

The protein resides in the preautophagosomal structure membrane. The protein localises to the lipid droplet. It is found in the endoplasmic reticulum membrane. It carries out the reaction a 1,2-diacyl-sn-glycero-3-phospho-L-serine(in) = a 1,2-diacyl-sn-glycero-3-phospho-L-serine(out). It catalyses the reaction a 1,2-diacyl-sn-glycero-3-phosphoethanolamine(in) = a 1,2-diacyl-sn-glycero-3-phosphoethanolamine(out). Its function is as follows. Lipid transfer protein involved in autophagosome assembly. Tethers the edge of the isolation membrane (IM) to the endoplasmic reticulum (ER) and mediates direct lipid transfer from ER to IM for IM expansion. Binds to the ER exit site (ERES), which is the membrane source for autophagosome formation, and extracts phospholipids from the membrane source and transfers them to atg9 (atg9a or atg9b) to the IM for membrane expansion. Also regulates lipid droplets morphology and distribution within the cell. The chain is Autophagy-related protein 2 homolog A from Xenopus tropicalis (Western clawed frog).